A 281-amino-acid chain; its full sequence is Bifunctional protein FolD (281 aa).

NADP(+) contacts are provided by residues 164-166 (GRS), Ser-189, and Ile-230.

This sequence belongs to the tetrahydrofolate dehydrogenase/cyclohydrolase family. In terms of assembly, homodimer.

The enzyme catalyses (6R)-5,10-methylene-5,6,7,8-tetrahydrofolate + NADP(+) = (6R)-5,10-methenyltetrahydrofolate + NADPH. The catalysed reaction is (6R)-5,10-methenyltetrahydrofolate + H2O = (6R)-10-formyltetrahydrofolate + H(+). It participates in one-carbon metabolism; tetrahydrofolate interconversion. Functionally, catalyzes the oxidation of 5,10-methylenetetrahydrofolate to 5,10-methenyltetrahydrofolate and then the hydrolysis of 5,10-methenyltetrahydrofolate to 10-formyltetrahydrofolate. The protein is Bifunctional protein FolD of Pelagibacter ubique (strain HTCC1062).